Here is a 678-residue protein sequence, read N- to C-terminus: ATP-dependent RNA helicase DHX58 (678 aa).

Positions 11-188 constitute a Helicase ATP-binding domain; sequence ILPALEGKNI…QGAIDHILQL (178 aa). 24-31 lines the ATP pocket; the sequence is LPTGAGKT. A DECH box motif is present at residues 131-134; the sequence is DECH. One can recognise a Helicase C-terminal domain in the interval 353–514; it reads MLERILLKQF…KAVAAVQKMD (162 aa). Residues 489–546 adopt a coiled-coil conformation; it reads EMKRELTNEALEVLMEKAVAAVQKMDPDEFKAKIRDLQQASLVKRAARAAHREIQQGQ. Residues 542-669 enclose the RLR CTR domain; sequence IQQGQFLPEH…PVFDILQDCT (128 aa). Zn(2+) contacts are provided by cysteine 556, cysteine 559, cysteine 612, and cysteine 615. The segment at 572–655 is RNA-binding; sequence VEGTHHVNVN…KIQAKKWSRV (84 aa).

Belongs to the helicase family. RLR subfamily. Monomer in the absence of dsRNA. Homodimer in the presence of dsRNA. Interacts with RIGI (via CARD domain), MAVS/IPS1 and DDX60. Found in a complex with RIGI and IFIH1/MDA5. Interacts with ANKRD17. Directly interacts with ATG5 and ATG12, either as ATG5 and ATG12 monomers or as ATG12-ATG5 conjugates. As to expression, highly expressed in mammary tissues. Expressed in liver and testis. Expressed at lower level in spleen, embryo, mammary gland and breast tumors.

Its subcellular location is the cytoplasm. It carries out the reaction ATP + H2O = ADP + phosphate + H(+). Its function is as follows. Acts as a regulator of RIGI and IFIH1/MDA5 mediated antiviral signaling. Cannot initiate antiviral signaling as it lacks the CARD domain required for activating MAVS/IPS1-dependent signaling events. Can have both negative and positive regulatory functions related to RIGI and IFIH1/MDA5 signaling and this role in regulating signaling may be complex and could probably depend on characteristics of the infecting virus or target cells, or both. Its inhibitory action on RIG-I signaling may involve the following mechanisms: competition with RIGI for binding to the viral RNA, binding to RIGI and inhibiting its dimerization and interaction with MAVS/IPS1, competing with IKBKE in its binding to MAVS/IPS1 thereby inhibiting activation of interferon regulatory factor 3 (IRF3). Its positive regulatory role may involve unwinding or stripping nucleoproteins of viral RNA thereby facilitating their recognition by RIGI and IFIH1/MDA5. Involved in the innate immune response to various RNA viruses and some DNA viruses such as poxviruses, and also to the bacterial pathogen Listeria monocytogenes. Can bind both ssRNA and dsRNA, with a higher affinity for dsRNA. Shows a preference to 5'-triphosphorylated RNA, although it can recognize RNA lacking a 5'-triphosphate. The polypeptide is ATP-dependent RNA helicase DHX58 (Mus musculus (Mouse)).